Reading from the N-terminus, the 539-residue chain is Eukaryotic translation initiation factor 3 subunit L (539 aa).

A PCI domain is found at 306–514; sequence TFSDILLYVQ…IHIADTKVSH (209 aa).

Belongs to the eIF-3 subunit L family. Component of the eukaryotic translation initiation factor 3 (eIF-3) complex. The eIF-3 complex interacts with pix.

The protein localises to the cytoplasm. Its function is as follows. Component of the eukaryotic translation initiation factor 3 (eIF-3) complex, which is involved in protein synthesis of a specialized repertoire of mRNAs and, together with other initiation factors, stimulates binding of mRNA and methionyl-tRNAi to the 40S ribosome. The eIF-3 complex specifically targets and initiates translation of a subset of mRNAs involved in cell proliferation. This is Eukaryotic translation initiation factor 3 subunit L from Drosophila willistoni (Fruit fly).